We begin with the raw amino-acid sequence, 155 residues long: Small ribosomal subunit protein uS7cz/uS7cy (155 aa).

This sequence belongs to the universal ribosomal protein uS7 family. As to quaternary structure, part of the 30S ribosomal subunit.

It localises to the plastid. The protein localises to the chloroplast. One of the primary rRNA binding proteins, it binds directly to 16S rRNA where it nucleates assembly of the head domain of the 30S subunit. The sequence is that of Small ribosomal subunit protein uS7cz/uS7cy (rps7-A) from Piper cenocladum (Ant piper).